Consider the following 452-residue polypeptide: Selenide, water dikinase 2 (452 aa).

N-acetylalanine is present on Ala2. Ser49 carries the post-translational modification Phosphoserine. Residue Sec63 is part of the active site. Residue Sec63 is a non-standard amino acid, selenocysteine. An ATP-binding site is contributed by Lys66. The interval Pro86–Pro111 is disordered. Low complexity predominate over residues Gly95–Leu105. Residues Gly121–Asp123, Asp141, Asp164, and Gly215–Thr218 each bind ATP. A Mg(2+)-binding site is contributed by Asp123. Position 164 (Asp164) interacts with Mg(2+). Asp319 is a Mg(2+) binding site.

This sequence belongs to the selenophosphate synthase 1 family. Class I subfamily. Homodimer. The cofactor is Mg(2+). Post-translationally, truncated SEPHS2 proteins produced by failed UGA/Sec decoding are ubiquitinated by the CRL2(KLHDC3) complex, which recognizes the glycine (Gly) at the C-terminus of truncated SEPHS2 proteins.

It carries out the reaction hydrogenselenide + ATP + H2O = selenophosphate + AMP + phosphate + 2 H(+). Its function is as follows. Synthesizes selenophosphate from selenide and ATP. The polypeptide is Selenide, water dikinase 2 (Sephs2) (Mus musculus (Mouse)).